Reading from the N-terminus, the 191-residue chain is CASP-like protein 2U3 (191 aa).

Topologically, residues 1 to 25 (MGAYDGAEAPRAAPASTAANSRPSR) are cytoplasmic. The chain crosses the membrane as a helical span at residues 26–46 (LLLLHSLLLRLVAVVVSILVI). Residues 47-68 (AVMVHAKQRVMIFKAEWDNSKA) are Extracellular-facing. A helical transmembrane segment spans residues 69-89 (FVALVAISAICLGYSFLQFIL). At 90–114 (SAFHLCSKSWKSPTKCWAWMNFIAD) the chain is on the cytoplasmic side. Residues 115 to 135 (QILTYAMLGAAAAAAELAYIA) traverse the membrane as a helical segment. The Extracellular segment spans residues 136-157 (KNGSSRAQWQPICSTFNTFCTR). Residue asparagine 137 is glycosylated (N-linked (GlcNAc...) asparagine). A helical membrane pass occupies residues 158–178 (AGASIILSFIAVLALANSSAI). Residues 179–191 (SAYHLFRRPSSSV) lie on the Cytoplasmic side of the membrane.

It belongs to the Casparian strip membrane proteins (CASP) family. Homodimer and heterodimers.

Its subcellular location is the cell membrane. The chain is CASP-like protein 2U3 from Selaginella moellendorffii (Spikemoss).